Reading from the N-terminus, the 2115-residue chain is Non-reducing polyketide synthase PFUR17_0229 (2115 aa).

The tract at residues 8 to 246 (VLFGDQTVDP…ISLPITAAFH (239 aa)) is N-terminal acylcarrier protein transacylase (SAT) domain (SAT). The Ketosynthase family 3 (KS3) domain maps to 367–796 (SGDIAIVGVA…GGNTSLVLED (430 aa)). Active-site for beta-ketoacyl synthase activity residues include cysteine 539, histidine 674, and histidine 713. A malonyl-CoA:ACP transacylase (MAT) domain region spans residues 895–1218 (IFAFTGQGAQ…SISNAYNSGA (324 aa)). The product template (PT) domain stretch occupies residues 1279–1592 (TTCLQKVESE…KRNILQSLLS (314 aa)). The segment at 1282-1413 (LQKVESETFT…CTVMYGDGQQ (132 aa)) is N-terminal hotdog fold. One can recognise a PKS/mFAS DH domain in the interval 1282 to 1588 (LQKVESETFT…FQKMKRNILQ (307 aa)). Catalysis depends on histidine 1315, which acts as the Proton acceptor; for dehydratase activity. The interval 1441-1588 (VHRLLKEMIY…FQKMKRNILQ (148 aa)) is C-terminal hotdog fold. The Proton donor; for dehydratase activity role is filled by aspartate 1501. Residues 1594-1613 (GHEETPPARPVPSKRTVQGS) are disordered. The 78-residue stretch at 1626-1703 (KAASGGFSNI…QLRNFFLDKV (78 aa)) folds into the Carrier 1 domain. Residue serine 1663 is modified to O-(pantetheine 4'-phosphoryl)serine. Residues 1710 to 1742 (FDDEESEMSSSTAGSTPGSSTSHGNQNTTVTTP) are disordered. The segment covering 1718-1733 (SSSTAGSTPGSSTSHG) has biased composition (low complexity). The Carrier 2 domain occupies 1742–1819 (PAEPDVVAIL…DVQKALGVPS (78 aa)). Serine 1779 is subject to O-(pantetheine 4'-phosphoryl)serine. The tract at residues 1861 to 2097 (LFLLPDGAGS…VVGGNHFSIM (237 aa)) is thioesterase (TE) domain.

The cofactor is pantetheine 4'-phosphate.

The enzyme catalyses 6 malonyl-CoA + 2 acetyl-CoA + 5 H(+) = o-orsellinate depside + 6 CO2 + 8 CoA + H2O. Non-reducing polyketide synthase; part of a gene cluster that mediates the biosynthesis of a yet unidentified depside/depsidone compound. The first step in the pathway is performed by the PKS PFUR17_0229 that condenses 2 acetyl-CoA starter units with 6 malonyl-CoA units to produce lecanoric acid (LA), also known as orsellinate depside. The biosynthesis occurs via the formation of 2 orsellinate intermediates fused together by the C-terminal thioesterase (TE) domain that finally releases lecanoric acid. In addition to the PKS gene, the PFUR17 gene cluster contains closely linked genes encoding a cytochrome P-450 and a laccase (phenol oxidase), directly upstream and downstream respectively, so it is likely that lecanoric acid is an intermediate in a longer biosynthetic pathway. This is Non-reducing polyketide synthase PFUR17_0229 from Pseudevernia furfuracea (Tree moss).